The following is a 161-amino-acid chain: Ubiquitin-conjugating enzyme E2Q-like protein 1 (161 aa).

A UBC core domain is found at 1-154 (MKELQDIARL…VKTHEKYGWV (154 aa)). Cys-88 serves as the catalytic Glycyl thioester intermediate.

It belongs to the ubiquitin-conjugating enzyme family. In terms of assembly, interacts with FBXW7.

Its subcellular location is the nucleus. The enzyme catalyses S-ubiquitinyl-[E1 ubiquitin-activating enzyme]-L-cysteine + [E2 ubiquitin-conjugating enzyme]-L-cysteine = [E1 ubiquitin-activating enzyme]-L-cysteine + S-ubiquitinyl-[E2 ubiquitin-conjugating enzyme]-L-cysteine.. It functions in the pathway protein modification; protein ubiquitination. Functionally, probable E2 ubiquitin-protein ligase that catalyzes the covalent attachment of ubiquitin to target proteins. May facilitate the monoubiquitination and degradation of MTOR and CCNE1 through interaction with FBXW7. The polypeptide is Ubiquitin-conjugating enzyme E2Q-like protein 1 (UBE2QL1) (Homo sapiens (Human)).